A 189-amino-acid chain; its full sequence is MKKIGIIGGTFDPPHYGHLLIANEVYHTLELDEVWFLPNQIPPHKRNRNVTSAEDRRKMLELAIEKEGYFSLCLEELEREGPSYTYDTMLQLTKKHPDTTFYFIIGGDMVEYLPKWYNIEKLLELVTFVGVARPGYTLQTPYKILTIEIPEFAVSSSLLRERYKNKKTCKYLLPEQVQSYIERNGLYES.

Belongs to the NadD family.

It catalyses the reaction nicotinate beta-D-ribonucleotide + ATP + H(+) = deamido-NAD(+) + diphosphate. It functions in the pathway cofactor biosynthesis; NAD(+) biosynthesis; deamido-NAD(+) from nicotinate D-ribonucleotide: step 1/1. Its function is as follows. Catalyzes the reversible adenylation of nicotinate mononucleotide (NaMN) to nicotinic acid adenine dinucleotide (NaAD). This chain is Probable nicotinate-nucleotide adenylyltransferase, found in Bacillus cytotoxicus (strain DSM 22905 / CIP 110041 / 391-98 / NVH 391-98).